The chain runs to 420 residues: Cell division protein FtsA (420 aa).

The protein belongs to the FtsA/MreB family. In terms of assembly, self-interacts. Interacts with FtsZ.

It localises to the cell inner membrane. Functionally, cell division protein that is involved in the assembly of the Z ring. May serve as a membrane anchor for the Z ring. This chain is Cell division protein FtsA, found in Escherichia coli O157:H7.